The following is a 396-amino-acid chain: Serine/threonine-protein kinase GRIK1 (396 aa).

Residues 22 to 65 (ERSRHSPNPYDDDTYSHDSGETSNPGGDDEEGEEEEEVEELSRS) are disordered. A compositionally biased stretch (acidic residues) spans 48-60 (GDDEEGEEEEEVE). A Protein kinase domain is found at 108 to 369 (FVRERKIGSG…LKAVAEHPWI (262 aa)). ATP is bound by residues 114 to 122 (IGSGSYGKV) and Lys-137. Position 154 is a phosphothreonine; by autocatalysis (Thr-154). Residue Asp-239 is the Proton acceptor of the active site. Ser-261 carries the post-translational modification Phosphoserine; by KIN10.

This sequence belongs to the protein kinase superfamily. Ser/Thr protein kinase family. In terms of assembly, associates with the SNF1-related protein kinase (SnRK) complex. Interacts with AL1, a geminivirus (TGMV) protein essential for viral replication. Expressed in shoot apical meristem, leaf primordium and emerging petiole (at protein level).

The protein resides in the cytoplasm. It is found in the nucleus. The catalysed reaction is L-seryl-[protein] + ATP = O-phospho-L-seryl-[protein] + ADP + H(+). It carries out the reaction L-threonyl-[protein] + ATP = O-phospho-L-threonyl-[protein] + ADP + H(+). Activated when autophosphorylated at Thr-154 and inactivated when phosphorylated at Ser-261 by SnRK1.1/KIN10. Its function is as follows. Activates SnRK1.1/KIN10 and SnRK1.2/KIN11 by phosphorylation of their activation-loop 'Thr-198' and 'Thr-176', respectively. Required for the regulation by SnRK1 kinases of the transcription of a large set of genes, the modification the activity of metabolic enzymes, and the control of various nutrient-responsive cellular developmental processes. This chain is Serine/threonine-protein kinase GRIK1 (GRIK1), found in Arabidopsis thaliana (Mouse-ear cress).